We begin with the raw amino-acid sequence, 862 residues long: Switch 2 (862 aa).

Disordered regions lie at residues 13 to 43 (PCGS…SSLS) and 58 to 95 (KHES…DDER). The segment covering 16-27 (SFPSSSSLRVSS) has biased composition (low complexity). Over residues 58-84 (KHESKISKTQVEDFDHNEDDHKRNIKF) the composition is skewed to basic and acidic residues. Residues 85–95 (DEEEVDEDDER) show a composition bias toward acidic residues. The Helicase ATP-binding domain occupies 151–323 (YNLYKNNHGG…FNLFEWVAPG (173 aa)). An ATP-binding site is contributed by 164–171 (DDMGLGKT). Residues 274–277 (DEAH) carry the DEAH box motif. A coiled-coil region spans residues 274–294 (DEAHRLKNEKSKLYEACLEIK). The 154-residue stretch at 532 to 685 (ALEKLMASWI…VAGKMETRYF (154 aa)) folds into the Helicase C-terminal domain. The segment covering 782–793 (TTSTSQRLNGDG) has biased composition (polar residues). Positions 782 to 821 (TTSTSQRLNGDGNSADRKKKKRKGCSEEEDMSSSNREQKR) are disordered.

It belongs to the SNF2/RAD54 helicase family.

Its function is as follows. May be involved in early DNA damage response. Probable chromatin remodeling factor. The sequence is that of Switch 2 from Arabidopsis thaliana (Mouse-ear cress).